Here is a 173-residue protein sequence, read N- to C-terminus: Alpha-crystallin A chain (173 aa).

Met1 bears the N-acetylmethionine mark. A required for complex formation with BFSP1 and BFSP2 region spans residues 1–63 (MDVTIQHPWF…RTVLDSGISE (63 aa)). Residue Gln6 is modified to Deamidated glutamine; partial. A Phosphoserine modification is found at Ser45. At Gln50 the chain carries Deamidated glutamine; partial. The region spanning 52–162 (LFRTVLDSGI…SHSERAIPVS (111 aa)) is the sHSP domain. Lys99 is modified (N6-acetyllysine). Position 100 (His100) interacts with Zn(2+). Asn101 carries the deamidated asparagine; partial modification. Residues Glu102 and His107 each coordinate Zn(2+). Ser122 bears the Phosphoserine mark. Asn123 is subject to Deamidated asparagine; partial. Residues Cys131 and Cys142 are joined by a disulfide bond. Deamidated glutamine; partial is present on Gln147. Residues 147 to 173 (QSGMDASHSERAIPVSREEKPSSAPSS) are disordered. Residues 153 to 167 (SHSERAIPVSREEKP) show a composition bias toward basic and acidic residues. His154 provides a ligand contact to Zn(2+). Residue Ser162 is glycosylated (O-linked (GlcNAc) serine).

This sequence belongs to the small heat shock protein (HSP20) family. As to quaternary structure, heteromer composed of three CRYAA and one CRYAB subunits. Inter-subunit bridging via zinc ions enhances stability, which is crucial as there is no protein turn over in the lens. Can also form homodimers and homotetramers (dimers of dimers) which serve as the building blocks of homooligomers. Within homooligomers, the zinc-binding motif is created from residues of 3 different molecules. His-100 and Glu-102 from one molecule are ligands of the zinc ion, and His-107 and His-154 residues from additional molecules complete the site with tetrahedral coordination geometry. Part of a complex required for lens intermediate filament formation composed of BFSP1, BFSP2 and CRYAA. Post-translationally, undergoes age-dependent proteolytical cleavage at the C-terminus.

It localises to the cytoplasm. The protein resides in the nucleus. Functionally, contributes to the transparency and refractive index of the lens. In its oxidized form (absence of intramolecular disulfide bond), acts as a chaperone, preventing aggregation of various proteins under a wide range of stress conditions. Required for the correct formation of lens intermediate filaments as part of a complex composed of BFSP1, BFSP2 and CRYAA. This chain is Alpha-crystallin A chain (CRYAA), found in Procavia capensis (Rock hyrax).